The primary structure comprises 436 residues: MSSNKKLFIQTLGCQMNDTDSQHIQAELEKHKGYVTTQNIEDADLIIINTCSVRERPVQKLFSEIGQFNKKKKEGAKIGVCGCTASHLGQDIIKRAPYVDFVVGARNISKIKDVVDVKGAVEVSIDNDESTYEFSTAKTNKYRASVNISVGCDKKCTYCIVPSTRGEEISIPPEMIVEQVRKSVEQGAVEVMLLGQNVNSYGRKFSDKREKYTFTKLLQDVSKIDGLERIRFTSPHPLHMDDEFIEEFAKNPKISKCIHMPLQSGSTSVLKAMKRGYSKEWFLNRASKMRELVPNLRITTDIIVAFPGETQEDFLDTLDVVEQVKFDQIFNFKYSPRPGTEALNLKDKELPDEIGSQRLIDLIELHKRYLEESMPKLIGETLNILVESLKPNGEVCGYTDNYLQVFAKGSDELLGKFVNVKITDVTRTSLKGEVVN.

In terms of domain architecture, MTTase N-terminal spans 5 to 120 (KKLFIQTLGC…IKDVVDVKGA (116 aa)). Cys14, Cys51, Cys83, Cys152, Cys156, and Cys159 together coordinate [4Fe-4S] cluster. Residues 138–372 (KTNKYRASVN…IELHKRYLEE (235 aa)) form the Radical SAM core domain. The 62-residue stretch at 375–436 (PKLIGETLNI…RTSLKGEVVN (62 aa)) folds into the TRAM domain.

Belongs to the methylthiotransferase family. MiaB subfamily. Monomer. [4Fe-4S] cluster serves as cofactor.

The protein localises to the cytoplasm. It carries out the reaction N(6)-dimethylallyladenosine(37) in tRNA + (sulfur carrier)-SH + AH2 + 2 S-adenosyl-L-methionine = 2-methylsulfanyl-N(6)-dimethylallyladenosine(37) in tRNA + (sulfur carrier)-H + 5'-deoxyadenosine + L-methionine + A + S-adenosyl-L-homocysteine + 2 H(+). Functionally, catalyzes the methylthiolation of N6-(dimethylallyl)adenosine (i(6)A), leading to the formation of 2-methylthio-N6-(dimethylallyl)adenosine (ms(2)i(6)A) at position 37 in tRNAs that read codons beginning with uridine. In Aliarcobacter butzleri (strain RM4018) (Arcobacter butzleri), this protein is tRNA-2-methylthio-N(6)-dimethylallyladenosine synthase.